Here is a 309-residue protein sequence, read N- to C-terminus: MSEINISAAAVKELREKTGAGMMDCKKALIETSGNFEEAIDFLRKKGLAVAAKKAGRIASEGLTAAKVDGLTGVVIEVNSETDFVARNEQFQALVKDIANLAVIAKTIDTLKTFKMQSGKSVEEEIIENIATIGENLTLRRMDILEISEGAIGSYVHNEVVPNLGKISVLVGLASNAKDKAKLEALAKQIAVHVAGNNPQSIDDSGLDQALVERERKVFFEKSKEEGKPDNIIEKMVEGRIRKFFSEVVLLQQNFLFEPKLTVAEVIKNAEKELGAAIKIAKFIRYELGEGIEHGEKNFADEVAAITQG.

The segment at 82 to 85 (TDFV) is involved in Mg(2+) ion dislocation from EF-Tu.

The protein belongs to the EF-Ts family.

The protein resides in the cytoplasm. Functionally, associates with the EF-Tu.GDP complex and induces the exchange of GDP to GTP. It remains bound to the aminoacyl-tRNA.EF-Tu.GTP complex up to the GTP hydrolysis stage on the ribosome. In Rickettsia massiliae (strain Mtu5), this protein is Elongation factor Ts.